The chain runs to 572 residues: Thiamine biosynthesis protein THI22 (572 aa).

Residues 1-19 (MVIILLGLCTLGFPRTAFC) form the signal peptide.

Belongs to the thiaminase-2 family.

The protein localises to the secreted. Its function is as follows. Is not required for thiamine biosynthesis. The chain is Thiamine biosynthesis protein THI22 (THI22) from Saccharomyces cerevisiae (strain ATCC 204508 / S288c) (Baker's yeast).